The primary structure comprises 78 residues: MALPKIEEVRQLSDEELAEEIIATKRELFDLRFQQATRQLENTHEFKHTRHRMAQLLTIERERQLNINQSSSTSAEEA.

It belongs to the universal ribosomal protein uL29 family.

The protein is Large ribosomal subunit protein uL29 of Crocosphaera subtropica (strain ATCC 51142 / BH68) (Cyanothece sp. (strain ATCC 51142)).